The primary structure comprises 349 residues: Ferredoxin--NADP reductase 1 (349 aa).

The FAD site is built by glutamate 36, lysine 44, tyrosine 48, isoleucine 88, leucine 123, aspartate 290, and serine 331.

The protein belongs to the ferredoxin--NADP reductase type 2 family. In terms of assembly, homodimer. Requires FAD as cofactor.

The catalysed reaction is 2 reduced [2Fe-2S]-[ferredoxin] + NADP(+) + H(+) = 2 oxidized [2Fe-2S]-[ferredoxin] + NADPH. The chain is Ferredoxin--NADP reductase 1 from Bacillus thuringiensis (strain Al Hakam).